Here is a 303-residue protein sequence, read N- to C-terminus: Movement protein (303 aa).

It belongs to the tobamovirus movement protein family.

It localises to the host cytoplasm. The protein resides in the host cytoskeleton. It is found in the host cell junction. The protein localises to the host plasmodesma. In terms of biological role, transports viral genome to neighboring plant cells directly through plasmosdesmata, without any budding. The movement protein allows efficient cell to cell propagation, by bypassing the host cell wall barrier. Forms a ribonucleoprotein complex with viral RNA. Binds microtubules and modulates microtubule stability. Can bind double-stranded DNA. The polypeptide is Movement protein (MP) (Odontoglossum ringspot virus (isolate Korean Cy) (ORSV-Cy)).